The primary structure comprises 86 residues: uncharacterized protein (86 aa).

This is an uncharacterized protein from Psittacid herpesvirus 1 (isolate Amazon parrot/-/97-0001/1997) (PsHV-1).